The chain runs to 351 residues: 3-dehydroquinate synthase (351 aa).

NAD(+) contacts are provided by residues 60–65 (DGEEYK), 94–98 (GVISD), 118–119 (TT), lysine 131, lysine 140, and 158–161 (FLKT). Residues glutamate 173, histidine 239, and histidine 256 each coordinate Zn(2+).

This sequence belongs to the sugar phosphate cyclases superfamily. Dehydroquinate synthase family. Requires Co(2+) as cofactor. Zn(2+) serves as cofactor. The cofactor is NAD(+).

It localises to the cytoplasm. The enzyme catalyses 7-phospho-2-dehydro-3-deoxy-D-arabino-heptonate = 3-dehydroquinate + phosphate. The protein operates within metabolic intermediate biosynthesis; chorismate biosynthesis; chorismate from D-erythrose 4-phosphate and phosphoenolpyruvate: step 2/7. Functionally, catalyzes the conversion of 3-deoxy-D-arabino-heptulosonate 7-phosphate (DAHP) to dehydroquinate (DHQ). This chain is 3-dehydroquinate synthase, found in Campylobacter jejuni subsp. jejuni serotype O:6 (strain 81116 / NCTC 11828).